Consider the following 469-residue polypeptide: Arginine biosynthesis bifunctional protein ArgJ, mitochondrial (469 aa).

Substrate is bound by residues threonine 199, lysine 228, threonine 239, glutamate 325, asparagine 464, and threonine 469. The Nucleophile role is filled by threonine 239.

The protein belongs to the ArgJ family. As to quaternary structure, heterodimer of an alpha and a beta chain. In terms of processing, the alpha and beta chains are autoproteolytically processed from a single precursor protein within the mitochondrion.

It is found in the mitochondrion matrix. It carries out the reaction N(2)-acetyl-L-ornithine + L-glutamate = N-acetyl-L-glutamate + L-ornithine. It catalyses the reaction L-glutamate + acetyl-CoA = N-acetyl-L-glutamate + CoA + H(+). Its pathway is amino-acid biosynthesis; L-arginine biosynthesis; L-ornithine and N-acetyl-L-glutamate from L-glutamate and N(2)-acetyl-L-ornithine (cyclic): step 1/1. It participates in amino-acid biosynthesis; L-arginine biosynthesis; N(2)-acetyl-L-ornithine from L-glutamate: step 1/4. Catalyzes two activities which are involved in the cyclic version of arginine biosynthesis: the synthesis of acetylglutamate from glutamate and acetyl-CoA, and of ornithine by transacetylation between acetylornithine and glutamate. The chain is Arginine biosynthesis bifunctional protein ArgJ, mitochondrial from Neurospora crassa (strain ATCC 24698 / 74-OR23-1A / CBS 708.71 / DSM 1257 / FGSC 987).